The sequence spans 339 residues: MSTNKITFLLNWEAAPYHIPVYLANIKGYFKDENLDIAILEPSNPSDVTELVGSGKVDMGLKAMVHTLAAKARGFPVTSIGSLLDEPFTGICYLEGSGITSDFQSLKGKRIGYVGEFGKIQVDELTKHYGMTPDDYVAVRCGMNVAKYILEGTIDCGIGIECIQQVELEEALKEQGKDSNDAKMLRIDKLAELGCCCFCTILYIANDKFIAENPQAVKKFLKAIKRATDYMLAHPREAWAEYGNFKPTMQTDLNTKKFQRCYAYFSESLYNVHRDWRKVNNYGKRLDILPENYVPNYTNEYLSWPEPKEVDDPEKAQDLMLKHQEECKTCGGYKRLVLA.

Lys-62 is subject to N6-(pyridoxal phosphate)lysine. The active site involves His-66. 115–118 (GEFG) contributes to the pyridoxal 5'-phosphate binding site. Positions 195–199 (CCCFC) match the CCCFC; essential for catalytic activity, may be the site of iron coordination motif.

This sequence belongs to the NMT1/THI5 family. As to quaternary structure, homodimer. It depends on Fe(3+) as a cofactor.

It carries out the reaction N(6)-(pyridoxal phosphate)-L-lysyl-[4-amino-5-hydroxymethyl-2-methylpyrimidine phosphate synthase] + L-histidyl-[4-amino-5-hydroxymethyl-2-methylpyrimidine phosphate synthase] + 2 Fe(3+) + 4 H2O = L-lysyl-[4-amino-5-hydroxymethyl-2-methylpyrimidine phosphate synthase] + (2S)-2-amino-5-hydroxy-4-oxopentanoyl-[4-amino-5-hydroxymethyl-2-methylpyrimidine phosphate synthase] + 4-amino-2-methyl-5-(phosphooxymethyl)pyrimidine + 3-oxopropanoate + 2 Fe(2+) + 2 H(+). It functions in the pathway cofactor biosynthesis; thiamine diphosphate biosynthesis. Responsible for the formation of the pyrimidine heterocycle in the thiamine biosynthesis pathway. Catalyzes the formation of hydroxymethylpyrimidine phosphate (HMP-P) from histidine and pyridoxal phosphate (PLP). The protein uses PLP and the active site histidine to form HMP-P, generating an inactive enzyme. The enzyme can only undergo a single turnover, which suggests it is a suicide enzyme. This chain is 4-amino-5-hydroxymethyl-2-methylpyrimidine phosphate synthase, found in Candida albicans (strain WO-1) (Yeast).